The following is a 291-amino-acid chain: Polyamine aminopropyltransferase (291 aa).

Residues 5–245 (PGPIVLMEPL…YAVNFVLGSL (241 aa)) enclose the PABS domain. Gln36 serves as a coordination point for S-methyl-5'-thioadenosine. Spermidine is bound by residues His67 and Glu91. S-methyl-5'-thioadenosine contacts are provided by residues Asp111 and 143–144 (DG). Asp164 serves as the catalytic Proton acceptor.

The protein belongs to the spermidine/spermine synthase family. In terms of assembly, homodimer or homotetramer.

It localises to the cytoplasm. The enzyme catalyses norspermidine + S-adenosyl 3-(methylsulfanyl)propylamine = norspermine + S-methyl-5'-thioadenosine + H(+). It catalyses the reaction S-adenosyl 3-(methylsulfanyl)propylamine + spermidine = thermospermine + S-methyl-5'-thioadenosine + H(+). In terms of biological role, involved in the biosynthesis of polyamines which are thought to support the growth of thermophilic microorganisms under high-temperature conditions. It seems that long-chain and branched-chain of polyamines effectively stabilize DNA and RNA, respectively. Catalyzes the irreversible transfer of a propylamine group from the amino donor S-adenosylmethioninamine (decarboxy-AdoMet) to norspermidine and 1,3-diaminopropane to yield norspermine, and to spermidine to yield thermospermine. It can also synthesize thermospermine from putrescine (1,4-diaminobutane) and caldopentamine from norspermine with a very low activity. The biosynthesis of caldohexamine and caldoheptamine from caldopentamine has been also observed. The protein is Polyamine aminopropyltransferase of Pyrobaculum aerophilum (strain ATCC 51768 / DSM 7523 / JCM 9630 / CIP 104966 / NBRC 100827 / IM2).